Reading from the N-terminus, the 239-residue chain is Serine protease SplC (239 aa).

Residues 1-36 form the signal peptide; that stretch reads MNKNIVIKSMAALAILTSVTGINAAVVDETQQIANA. Active-site charge relay system residues include His75, Asp113, and Ser193.

Belongs to the peptidase S1B family.

It is found in the secreted. The chain is Serine protease SplC (splC) from Staphylococcus aureus (strain bovine RF122 / ET3-1).